A 477-amino-acid polypeptide reads, in one-letter code: Oxidative stress-induced growth inhibitor 1 (477 aa).

Phosphoserine is present on Ser-12.

It belongs to the OKL38 family. NADPH is required as a cofactor. As to expression, ubiquitous. Highest expression in the ovary, testis, kidney, skeletal muscle and liver.

It is found in the midbody. Its function is as follows. Monooxygenase catalytic activity. Involved in regulation of cytokinesis; promotes RHOA activity, probably acting locally at the midbody in late cytokinesis. Monooxygenase activity is involved in stabilizing transient structures between daughter cells, termed intercellular bridges, before abscission. Regulates differentiation and proliferation through the regulation of cell death. This is Oxidative stress-induced growth inhibitor 1 from Homo sapiens (Human).